Consider the following 209-residue polypeptide: Glycerol-3-phosphate acyltransferase (209 aa).

Helical transmembrane passes span 8–28 (NVLF…YILA), 78–98 (VLVL…LIGI), 124–144 (VLLV…LIVA), 149–169 (ISSL…FIVH), and 170–190 (PDMP…IIFY).

The protein belongs to the PlsY family. As to quaternary structure, probably interacts with PlsX.

It is found in the cell inner membrane. The catalysed reaction is an acyl phosphate + sn-glycerol 3-phosphate = a 1-acyl-sn-glycero-3-phosphate + phosphate. It participates in lipid metabolism; phospholipid metabolism. Catalyzes the transfer of an acyl group from acyl-phosphate (acyl-PO(4)) to glycerol-3-phosphate (G3P) to form lysophosphatidic acid (LPA). This enzyme utilizes acyl-phosphate as fatty acyl donor, but not acyl-CoA or acyl-ACP. This chain is Glycerol-3-phosphate acyltransferase, found in Nitratiruptor sp. (strain SB155-2).